Reading from the N-terminus, the 474-residue chain is Protein Rv3254 (474 aa).

Residues 1–4 (MTGR) constitute a propeptide that is removed on maturation.

In Mycobacterium tuberculosis (strain ATCC 25618 / H37Rv), this protein is Protein Rv3254.